Reading from the N-terminus, the 208-residue chain is Pyridoxine/pyridoxamine 5'-phosphate oxidase (208 aa).

FMN contacts are provided by residues 55–60 (RMVLLK), 70–71 (YT), K76, K77, and Q99. K60 is a substrate binding site. Substrate is bound by residues Y117, R121, and S125. FMN is bound by residues 134 to 135 (QS) and W179. 185-187 (RLH) provides a ligand contact to substrate. R189 provides a ligand contact to FMN.

This sequence belongs to the pyridoxamine 5'-phosphate oxidase family. Homodimer. FMN serves as cofactor.

The catalysed reaction is pyridoxamine 5'-phosphate + O2 + H2O = pyridoxal 5'-phosphate + H2O2 + NH4(+). It catalyses the reaction pyridoxine 5'-phosphate + O2 = pyridoxal 5'-phosphate + H2O2. The protein operates within cofactor metabolism; pyridoxal 5'-phosphate salvage; pyridoxal 5'-phosphate from pyridoxamine 5'-phosphate: step 1/1. It functions in the pathway cofactor metabolism; pyridoxal 5'-phosphate salvage; pyridoxal 5'-phosphate from pyridoxine 5'-phosphate: step 1/1. Catalyzes the oxidation of either pyridoxine 5'-phosphate (PNP) or pyridoxamine 5'-phosphate (PMP) into pyridoxal 5'-phosphate (PLP). The protein is Pyridoxine/pyridoxamine 5'-phosphate oxidase of Brucella abortus biovar 1 (strain 9-941).